The chain runs to 177 residues: MSELSTVARPYAKAAFDFALEQGQLDKWQEMLQFSAFVAENEQVAEYINSSLASGQISETFIKICGDQLDQYGQNFIRVMAENKRLAVLPMVFDTFVSLRAEHEAVKDVTIFSANELSQAQEDKIAKAMEKRLGQKVRLTNQIDNSLIAGVIIKYDDVVIDGSSRGQLNRLASALSL.

The protein belongs to the ATPase delta chain family. F-type ATPases have 2 components, F(1) - the catalytic core - and F(0) - the membrane proton channel. F(1) has five subunits: alpha(3), beta(3), gamma(1), delta(1), epsilon(1). F(0) has three main subunits: a(1), b(2) and c(10-14). The alpha and beta chains form an alternating ring which encloses part of the gamma chain. F(1) is attached to F(0) by a central stalk formed by the gamma and epsilon chains, while a peripheral stalk is formed by the delta and b chains.

Its subcellular location is the cell inner membrane. Its function is as follows. F(1)F(0) ATP synthase produces ATP from ADP in the presence of a proton or sodium gradient. F-type ATPases consist of two structural domains, F(1) containing the extramembraneous catalytic core and F(0) containing the membrane proton channel, linked together by a central stalk and a peripheral stalk. During catalysis, ATP synthesis in the catalytic domain of F(1) is coupled via a rotary mechanism of the central stalk subunits to proton translocation. This protein is part of the stalk that links CF(0) to CF(1). It either transmits conformational changes from CF(0) to CF(1) or is implicated in proton conduction. In Actinobacillus pleuropneumoniae serotype 7 (strain AP76), this protein is ATP synthase subunit delta.